Reading from the N-terminus, the 341-residue chain is S-adenosylmethionine:tRNA ribosyltransferase-isomerase (341 aa).

The protein belongs to the QueA family. As to quaternary structure, monomer.

The protein resides in the cytoplasm. It catalyses the reaction 7-aminomethyl-7-carbaguanosine(34) in tRNA + S-adenosyl-L-methionine = epoxyqueuosine(34) in tRNA + adenine + L-methionine + 2 H(+). The protein operates within tRNA modification; tRNA-queuosine biosynthesis. Its function is as follows. Transfers and isomerizes the ribose moiety from AdoMet to the 7-aminomethyl group of 7-deazaguanine (preQ1-tRNA) to give epoxyqueuosine (oQ-tRNA). This Chlorobium chlorochromatii (strain CaD3) protein is S-adenosylmethionine:tRNA ribosyltransferase-isomerase.